The sequence spans 301 residues: Large ribosomal subunit protein uL18 (301 aa).

Positions 257 to 271 are enriched in basic and acidic residues; that stretch reads NPERVKSTKKNDKPK. The interval 257–283 is disordered; that stretch reads NPERVKSTKKNDKPKRDHKKFYPTKLT.

Belongs to the universal ribosomal protein uL18 family. Component of the large ribosomal subunit (LSU).

The protein localises to the cytoplasm. It is found in the nucleus. Its function is as follows. Component of the ribosome, a large ribonucleoprotein complex responsible for the synthesis of proteins in the cell. The small ribosomal subunit (SSU) binds messenger RNAs (mRNAs) and translates the encoded message by selecting cognate aminoacyl-transfer RNA (tRNA) molecules. The large subunit (LSU) contains the ribosomal catalytic site termed the peptidyl transferase center (PTC), which catalyzes the formation of peptide bonds, thereby polymerizing the amino acids delivered by tRNAs into a polypeptide chain. The nascent polypeptides leave the ribosome through a tunnel in the LSU and interact with protein factors that function in enzymatic processing, targeting, and the membrane insertion of nascent chains at the exit of the ribosomal tunnel. In Tetrahymena thermophila (strain SB210), this protein is Large ribosomal subunit protein uL18 (RPL5).